The sequence spans 100 residues: Large ribosomal subunit protein uL23c (100 aa).

Belongs to the universal ribosomal protein uL23 family. In terms of assembly, part of the 50S ribosomal subunit.

The protein localises to the plastid. Its subcellular location is the chloroplast. Binds to 23S rRNA. The polypeptide is Large ribosomal subunit protein uL23c (rpl23) (Euglena gracilis).